The chain runs to 84 residues: Small ribosomal subunit protein uS17 (84 aa).

This sequence belongs to the universal ribosomal protein uS17 family. In terms of assembly, part of the 30S ribosomal subunit.

Functionally, one of the primary rRNA binding proteins, it binds specifically to the 5'-end of 16S ribosomal RNA. This Salmonella typhi protein is Small ribosomal subunit protein uS17.